We begin with the raw amino-acid sequence, 255 residues long: Ribonuclease HII (255 aa).

In terms of domain architecture, RNase H type-2 spans 73 to 255 (LYIGGIDEAG…HRKSFLKNIL (183 aa)). Residues Asp-79, Glu-80, and Asp-171 each contribute to the a divalent metal cation site.

This sequence belongs to the RNase HII family. Requires Mn(2+) as cofactor. Mg(2+) is required as a cofactor.

Its subcellular location is the cytoplasm. The catalysed reaction is Endonucleolytic cleavage to 5'-phosphomonoester.. Its function is as follows. Endonuclease that specifically degrades the RNA of RNA-DNA hybrids. The sequence is that of Ribonuclease HII from Clostridioides difficile (strain 630) (Peptoclostridium difficile).